The following is a 126-amino-acid chain: Adenosine 5'-monophosphoramidase HINT1 (126 aa).

An N-acetylalanine modification is found at Ala-2. An HIT domain is found at 18 to 126; sequence IFGKIIRKEI…GGRQMNWPPG (109 aa). N6-acetyllysine occurs at positions 21 and 30. Residue 43 to 44 coordinates AMP; the sequence is DI. Ser-45 and Ser-72 each carry phosphoserine. Residues Asn-99, 105-107, and 112-114 contribute to the AMP site; these read GQS and HLH. The Histidine triad motif signature appears at 110–114; sequence HVHLH. The active-site Tele-AMP-histidine intermediate is His-112.

Belongs to the HINT family. As to quaternary structure, homodimer. Interacts with CDK7. Interacts with RUVBL1 and RUVBL2 and is associated with the LEF1/TCF1-CTNNB1 complex and with a KAT5 histone acetyltransferase complex. Identified in a complex with MITF and CTNNB1. Interacts with CDC34 and RBX1, and is part of a SCF (SKP2-CUL1-F-box protein) E3 ubiquitin-protein ligase complex. Interacts with SUMO1, SUMO2 and RGS17. Interacts with the Ten-1 ICD form of TENM1. Interacts with CALM1; interaction increases in the presence of calcium ions. As to expression, widely expressed.

The protein resides in the cytoplasm. Its subcellular location is the nucleus. The enzyme catalyses adenosine 5'-phosphoramidate + H2O = AMP + NH4(+). In terms of biological role, exhibits adenosine 5'-monophosphoramidase activity, hydrolyzing purine nucleotide phosphoramidates with a single phosphate group such as adenosine 5'monophosphoramidate (AMP-NH2) to yield AMP and NH2. Hydrolyzes adenosine 5'monophosphomorpholidate (AMP-morpholidate) and guanosine 5'monophosphomorpholidate (GMP-morpholidate). Hydrolyzes lysyl-AMP (AMP-N-epsilon-(N-alpha-acetyl lysine methyl ester)) generated by lysine tRNA ligase. Hydrolyzes Met-AMP, His-AMP, Asp-AMP, lysyl-GMP (GMP-N-epsilon-(N-alpha-acetyl lysine methyl ester)) and AMP-N-alanine methyl ester. Can also convert adenosine 5'-O-phosphorothioate and guanosine 5'-O-phosphorothioate to the corresponding nucleoside 5'-O-phosphates with concomitant release of hydrogen sulfide. In addition, functions as a scaffolding protein that modulates transcriptional activation by the LEF1/TCF1-CTNNB1 complex and by the complex formed with MITF and CTNNB1. Modulates p53/TP53 levels and p53/TP53-mediated apoptosis. Modulates proteasomal degradation of target proteins by the SCF (SKP2-CUL1-F-box protein) E3 ubiquitin-protein ligase complex. Also exhibits SUMO-specific isopeptidase activity, deconjugating SUMO1 from RANGAP1 and RGS17. This Oryctolagus cuniculus (Rabbit) protein is Adenosine 5'-monophosphoramidase HINT1 (HINT1).